Reading from the N-terminus, the 158-residue chain is Rhombotin-2 (158 aa).

LIM zinc-binding domains follow at residues 30–89 and 94–153; these read CGGC…RLFG and CASC…EWTK.

As to quaternary structure, interacts via its LIM domains with ELF2 and LDB1. Interacts with BEX2 and KDM5A. Also interacts with basic helix-loop-helix protein TAL1/SCL and can assemble in a complex with LMO2 and TAL1/SCL.

The protein localises to the nucleus. In terms of biological role, acts with TAL1/SCL to regulate red blood cell development. Also acts with LDB1 to maintain erythroid precursors in an immature state. The chain is Rhombotin-2 (LMO2) from Bos taurus (Bovine).